We begin with the raw amino-acid sequence, 226 residues long: Cytochrome c oxidase subunit 2 (226 aa).

At 1–14 (MAYPLQLGLQDATS) the chain is on the mitochondrial intermembrane side. The chain crosses the membrane as a helical span at residues 15–45 (PIMEELTSFHDHTLMIVFLISTLVLYIISLM). Topologically, residues 46–59 (LTTKLTHTSTMDAQ) are mitochondrial matrix. The helical transmembrane segment at 60-87 (EIETIWTILPAIILIMIALPSLRVLYMM) threads the bilayer. Over 88 to 226 (DEINNPALTV…KYFEAWSASM (139 aa)) the chain is Mitochondrial intermembrane. Positions 161, 196, 198, 200, 204, and 207 each coordinate Cu cation. Glu-198 contacts Mg(2+). Tyr-218 bears the Phosphotyrosine mark.

Belongs to the cytochrome c oxidase subunit 2 family. In terms of assembly, component of the cytochrome c oxidase (complex IV, CIV), a multisubunit enzyme composed of 14 subunits. The complex is composed of a catalytic core of 3 subunits MT-CO1, MT-CO2 and MT-CO3, encoded in the mitochondrial DNA, and 11 supernumerary subunits COX4I, COX5A, COX5B, COX6A, COX6B, COX6C, COX7A, COX7B, COX7C, COX8 and NDUFA4, which are encoded in the nuclear genome. The complex exists as a monomer or a dimer and forms supercomplexes (SCs) in the inner mitochondrial membrane with NADH-ubiquinone oxidoreductase (complex I, CI) and ubiquinol-cytochrome c oxidoreductase (cytochrome b-c1 complex, complex III, CIII), resulting in different assemblies (supercomplex SCI(1)III(2)IV(1) and megacomplex MCI(2)III(2)IV(2)). Found in a complex with TMEM177, COA6, COX18, COX20, SCO1 and SCO2. Interacts with TMEM177 in a COX20-dependent manner. Interacts with COX20. Interacts with COX16. The cofactor is Cu cation.

It is found in the mitochondrion inner membrane. It catalyses the reaction 4 Fe(II)-[cytochrome c] + O2 + 8 H(+)(in) = 4 Fe(III)-[cytochrome c] + 2 H2O + 4 H(+)(out). In terms of biological role, component of the cytochrome c oxidase, the last enzyme in the mitochondrial electron transport chain which drives oxidative phosphorylation. The respiratory chain contains 3 multisubunit complexes succinate dehydrogenase (complex II, CII), ubiquinol-cytochrome c oxidoreductase (cytochrome b-c1 complex, complex III, CIII) and cytochrome c oxidase (complex IV, CIV), that cooperate to transfer electrons derived from NADH and succinate to molecular oxygen, creating an electrochemical gradient over the inner membrane that drives transmembrane transport and the ATP synthase. Cytochrome c oxidase is the component of the respiratory chain that catalyzes the reduction of oxygen to water. Electrons originating from reduced cytochrome c in the intermembrane space (IMS) are transferred via the dinuclear copper A center (CU(A)) of subunit 2 and heme A of subunit 1 to the active site in subunit 1, a binuclear center (BNC) formed by heme A3 and copper B (CU(B)). The BNC reduces molecular oxygen to 2 water molecules using 4 electrons from cytochrome c in the IMS and 4 protons from the mitochondrial matrix. The protein is Cytochrome c oxidase subunit 2 (MT-CO2) of Perognathus flavus (Silky pocket mouse).